Consider the following 299-residue polypeptide: Dye-decolorizing peroxidase YfeX (299 aa).

Asp-143 acts as the Proton acceptor in catalysis. His-215 provides a ligand contact to heme.

The protein belongs to the DyP-type peroxidase family. Requires heme b as cofactor.

The protein resides in the cytoplasm. Its function is as follows. Has both general peroxidase activity and dye-decolorizing activity. Can catalyze the oxidation of both protoporphyrinogen IX and coproporphyrinogen III to their corresponding porphyrins. Also efficiently decolorizes the dyes alizarin red and Cibacron blue F3GA. The protein is Dye-decolorizing peroxidase YfeX (yfeX) of Escherichia coli (strain K12).